Here is a 220-residue protein sequence, read N- to C-terminus: GTP cyclohydrolase 1 (220 aa).

3 residues coordinate Zn(2+): C109, H112, and C180.

This sequence belongs to the GTP cyclohydrolase I family. In terms of assembly, homomer.

The catalysed reaction is GTP + H2O = 7,8-dihydroneopterin 3'-triphosphate + formate + H(+). It functions in the pathway cofactor biosynthesis; 7,8-dihydroneopterin triphosphate biosynthesis; 7,8-dihydroneopterin triphosphate from GTP: step 1/1. The chain is GTP cyclohydrolase 1 from Edwardsiella ictaluri (strain 93-146).